Reading from the N-terminus, the 88-residue chain is Large ribosomal subunit protein bL27 (88 aa).

Residues 1 to 24 (MAHKKAGGSSRNGRDSAGQRRGVK) are disordered.

Belongs to the bacterial ribosomal protein bL27 family.

The sequence is that of Large ribosomal subunit protein bL27 from Syntrophobacter fumaroxidans (strain DSM 10017 / MPOB).